The sequence spans 473 residues: Ras-GEF domain-containing family member 1B (473 aa).

In terms of domain architecture, N-terminal Ras-GEF spans 34–164; that stretch reads HDNNLLSGSL…QMMQCLIRKL (131 aa). Residues 204-452 form the Ras-GEF domain; it reads NDPYTLAQQL…LYLASYESEG (249 aa).

As to quaternary structure, interacts with Ras family proteins. Interacts with CCDC124 during cytokinesis.

The protein localises to the early endosome. It localises to the late endosome. It is found in the midbody. Its function is as follows. Guanine nucleotide exchange factor (GEF) with specificity for RAP2A, it doesn't seems to activate other Ras family proteins (in vitro). The chain is Ras-GEF domain-containing family member 1B (RASGEF1B) from Homo sapiens (Human).